Consider the following 236-residue polypeptide: DNA repair and recombination protein RadB (236 aa).

This sequence belongs to the eukaryotic RecA-like protein family. RadB subfamily.

Its function is as follows. Involved in DNA repair and in homologous recombination. May regulate the cleavage reactions of the branch-structured DNA. Has a very weak ATPase activity that is not stimulated by DNA. Binds DNA but does not promote DNA strands exchange. The chain is DNA repair and recombination protein RadB from Halobacterium salinarum (strain ATCC 29341 / DSM 671 / R1).